The primary structure comprises 215 residues: Octanoyltransferase (215 aa).

Residues Pro31–Glu206 enclose the BPL/LPL catalytic domain. Residues Arg70–His77, Ser137–Gly139, and Gly150–Ala152 contribute to the substrate site. Cys168 functions as the Acyl-thioester intermediate in the catalytic mechanism.

This sequence belongs to the LipB family.

Its subcellular location is the cytoplasm. The catalysed reaction is octanoyl-[ACP] + L-lysyl-[protein] = N(6)-octanoyl-L-lysyl-[protein] + holo-[ACP] + H(+). It participates in protein modification; protein lipoylation via endogenous pathway; protein N(6)-(lipoyl)lysine from octanoyl-[acyl-carrier-protein]: step 1/2. In terms of biological role, catalyzes the transfer of endogenously produced octanoic acid from octanoyl-acyl-carrier-protein onto the lipoyl domains of lipoate-dependent enzymes. Lipoyl-ACP can also act as a substrate although octanoyl-ACP is likely to be the physiological substrate. In Pseudomonas entomophila (strain L48), this protein is Octanoyltransferase.